Reading from the N-terminus, the 876-residue chain is Phosphoenolpyruvate carboxylase (876 aa).

Residues His138 and Lys543 contribute to the active site.

This sequence belongs to the PEPCase type 1 family. Mg(2+) is required as a cofactor.

The enzyme catalyses oxaloacetate + phosphate = phosphoenolpyruvate + hydrogencarbonate. Forms oxaloacetate, a four-carbon dicarboxylic acid source for the tricarboxylic acid cycle. This is Phosphoenolpyruvate carboxylase from Vibrio atlanticus (strain LGP32) (Vibrio splendidus (strain Mel32)).